The following is a 256-amino-acid chain: Osteocalcin 2 (256 aa).

A signal peptide spans 1–18 (MKTLVLLSICALLSVCWS). Residues 19 to 209 (MGAVEPEVVV…LASVLLRRRR (191 aa)) constitute a propeptide that is removed on maturation. Residues 38–186 (AAPADPAAAA…SSSSSSSSES (149 aa)) are compositionally biased toward low complexity. The interval 38–193 (AAPADPAAAA…SESASDEAAK (156 aa)) is disordered. Residues 218–252 (PLQLESLREVCELNIACDEMAETAGIVAAYVAYYG) enclose the Gla domain. Positions 222, 226, 229, and 235 each coordinate Ca(2+). 4-carboxyglutamate is present on residues Glu-222, Glu-226, and Glu-229. Cys-228 and Cys-234 form a disulfide bridge. The residue at position 236 (Glu-236) is a 4-carboxyglutamate.

This sequence belongs to the osteocalcin/matrix Gla protein family. Gamma-carboxyglutamate residues are formed by vitamin K dependent carboxylation by GGCX. These residues are essential for the binding of calcium.

The protein localises to the secreted. Functionally, the carboxylated form is one of the main organic components of the bone matrix, which constitutes 1-2% of the total bone protein. The carboxylated form binds strongly to apatite and calcium. This chain is Osteocalcin 2, found in Diplodus sargus (White seabream).